The sequence spans 152 residues: MTITDLVLILFIAVLLAFAIYDQFIMPRRNGPTLLAIPLLRRGRIDSVIFVGLIVILIYNSVTNHGALITTWLLSALALMGFYIFWIRVPKIIFKQKGFFFANVWIEYSRIKAMNLSEDGVLVMQLEQRRLLIRVRNIDDLEKVYKLLVSTQ.

3 helical membrane-spanning segments follow: residues 6–26 (LVLI…QFIM), 45–65 (IDSV…VTNH), and 67–87 (ALIT…IFWI).

Belongs to the UPF0266 family.

The protein resides in the cell inner membrane. This is UPF0266 membrane protein YobD from Escherichia coli O127:H6 (strain E2348/69 / EPEC).